Consider the following 420-residue polypeptide: Gamma-glutamyl phosphate reductase (420 aa).

The protein belongs to the gamma-glutamyl phosphate reductase family.

It localises to the cytoplasm. The enzyme catalyses L-glutamate 5-semialdehyde + phosphate + NADP(+) = L-glutamyl 5-phosphate + NADPH + H(+). Its pathway is amino-acid biosynthesis; L-proline biosynthesis; L-glutamate 5-semialdehyde from L-glutamate: step 2/2. Catalyzes the NADPH-dependent reduction of L-glutamate 5-phosphate into L-glutamate 5-semialdehyde and phosphate. The product spontaneously undergoes cyclization to form 1-pyrroline-5-carboxylate. The protein is Gamma-glutamyl phosphate reductase of Alkalilimnicola ehrlichii (strain ATCC BAA-1101 / DSM 17681 / MLHE-1).